We begin with the raw amino-acid sequence, 101 residues long: Guanyl-specific ribonuclease St (101 aa).

The cysteines at positions 4 and 54 are disulfide-linked. Glu61 (proton acceptor) is an active-site residue. The active-site Proton donor is His91.

It belongs to the ribonuclease N1/T1 family.

It catalyses the reaction [RNA] containing guanosine + H2O = an [RNA fragment]-3'-guanosine-3'-phosphate + a 5'-hydroxy-ribonucleotide-3'-[RNA fragment].. This Saccharopolyspora erythraea (Streptomyces erythraeus) protein is Guanyl-specific ribonuclease St.